The chain runs to 795 residues: Protocadherin beta-4 (795 aa).

The N-terminal stretch at 1–27 is a signal peptide; that stretch reads MKKLGRIHPNRQVLAFILMVFLSQVRL. The Extracellular portion of the chain corresponds to 28-689; that stretch reads EPIRYSVLEE…SQADSLTVYL (662 aa). 5 consecutive Cadherin domains span residues 34 to 132, 137 to 241, 246 to 346, 351 to 450, and 455 to 560; these read VLEE…SPVF, VLLK…APEF, YGVQ…PPEL, LTSS…APAF, and YTLF…SPFV. A glycan (N-linked (GlcNAc...) asparagine) is linked at N183. Residue N417 is glycosylated (N-linked (GlcNAc...) asparagine). N-linked (GlcNAc...) asparagine glycosylation is present at N566. One can recognise a Cadherin 6 domain in the interval 567–670; sequence GSAPCTELVP…LVDGFSQPYL (104 aa). Residues 690–710 form a helical membrane-spanning segment; the sequence is VVALASVSSLFLFSVLLFVAV. Over 711–795 the chain is Cytoplasmic; sequence RLCRRSRAAS…PKFRNSLVFS (85 aa).

It is found in the cell membrane. Potential calcium-dependent cell-adhesion protein. May be involved in the establishment and maintenance of specific neuronal connections in the brain. In Pan troglodytes (Chimpanzee), this protein is Protocadherin beta-4 (PCDHB4).